We begin with the raw amino-acid sequence, 63 residues long: Small ribosomal subunit protein bS21 (63 aa).

This sequence belongs to the bacterial ribosomal protein bS21 family.

The polypeptide is Small ribosomal subunit protein bS21 (Syntrophus aciditrophicus (strain SB)).